The sequence spans 159 residues: ATP synthase subunit b 2 (159 aa).

Residues 1–21 traverse the membrane as a helical segment; it reads MDATFWAFIALVIFVAIVVYM.

The protein belongs to the ATPase B chain family. As to quaternary structure, F-type ATPases have 2 components, F(1) - the catalytic core - and F(0) - the membrane proton channel. F(1) has five subunits: alpha(3), beta(3), gamma(1), delta(1), epsilon(1). F(0) has three main subunits: a(1), b(2) and c(10-14). The alpha and beta chains form an alternating ring which encloses part of the gamma chain. F(1) is attached to F(0) by a central stalk formed by the gamma and epsilon chains, while a peripheral stalk is formed by the delta and b chains.

It is found in the cell inner membrane. F(1)F(0) ATP synthase produces ATP from ADP in the presence of a proton or sodium gradient. F-type ATPases consist of two structural domains, F(1) containing the extramembraneous catalytic core and F(0) containing the membrane proton channel, linked together by a central stalk and a peripheral stalk. During catalysis, ATP synthesis in the catalytic domain of F(1) is coupled via a rotary mechanism of the central stalk subunits to proton translocation. In terms of biological role, component of the F(0) channel, it forms part of the peripheral stalk, linking F(1) to F(0). The chain is ATP synthase subunit b 2 from Brucella suis (strain ATCC 23445 / NCTC 10510).